The chain runs to 206 residues: dITP/XTP pyrophosphatase (206 aa).

7–12 (SRNPKK) contributes to the substrate binding site. D72 functions as the Proton acceptor in the catalytic mechanism. Mg(2+) is bound at residue D72. Residues S73, 155–158 (FGYD), K178, and 183–184 (HR) each bind substrate.

It belongs to the HAM1 NTPase family. As to quaternary structure, homodimer. Mg(2+) serves as cofactor.

It catalyses the reaction XTP + H2O = XMP + diphosphate + H(+). The enzyme catalyses dITP + H2O = dIMP + diphosphate + H(+). The catalysed reaction is ITP + H2O = IMP + diphosphate + H(+). In terms of biological role, pyrophosphatase that catalyzes the hydrolysis of nucleoside triphosphates to their monophosphate derivatives, with a high preference for the non-canonical purine nucleotides XTP (xanthosine triphosphate), dITP (deoxyinosine triphosphate) and ITP. Seems to function as a house-cleaning enzyme that removes non-canonical purine nucleotides from the nucleotide pool, thus preventing their incorporation into DNA/RNA and avoiding chromosomal lesions. The protein is dITP/XTP pyrophosphatase of Mycobacteroides abscessus (strain ATCC 19977 / DSM 44196 / CCUG 20993 / CIP 104536 / JCM 13569 / NCTC 13031 / TMC 1543 / L948) (Mycobacterium abscessus).